The chain runs to 228 residues: Translin (228 aa).

The tract at residues Arg86 to His90 is DNA/RNA binding. The interval Leu177 to Leu198 is leucine-zipper. The residue at position 187 (Lys187) is an N6-acetyllysine. Ser190 carries the phosphoserine modification. N6-acetyllysine is present on Lys199.

This sequence belongs to the translin family. Ring-shaped heterooctamer of six TSN and two TSNAX subunits, DNA/RNA binding occurs inside the ring.

It is found in the cytoplasm. It localises to the nucleus. In terms of biological role, DNA-binding protein that specifically recognizes consensus sequences at the breakpoint junctions in chromosomal translocations, mostly involving immunoglobulin (Ig)/T-cell receptor gene segments. Seems to recognize single-stranded DNA ends generated by staggered breaks occurring at recombination hot spots. Exhibits both single-stranded and double-stranded endoribonuclease activity. May act as an activator of RNA-induced silencing complex (RISC) by facilitating endonucleolytic cleavage of the siRNA passenger strand. The polypeptide is Translin (TSN) (Bos taurus (Bovine)).